The sequence spans 568 residues: General O-oligosaccharyltransferase (568 aa).

The next 12 helical transmembrane spans lie at 17 to 37 (VAVMRFLLLLLTAVLISLAWL), 46 to 66 (LTFASEMLSFAAFLSLLALFL), 78 to 98 (LALPVVFIPMIQWGFGLVVDF), 101 to 121 (ALLSSAYLLGFWLTMLLGYNL), 132 to 152 (FTLSSYLLFAVALLTSLIACI), 176 to 196 (FAQPNNMSTFLILGLLGCLYL), 214 to 234 (IVFAITLSQSRTAWVFGLFFI), 251 to 271 (YAVLLWAIGFFAVGLLFPRFT), 349 to 369 (LLVWNGWLLGGLITICILIWI), 376 to 396 (AKTTESIIACLMVSAVWIHTL), 397 to 417 (LEYPLQYAYFLLPVGFLMGLI), and 429 to 449 (VPVSVIRSIWVIGIMLLALIW).

This sequence belongs to the PglL O-oligosaccharyltransferase family.

It is found in the cell membrane. In terms of biological role, catalyzes the O-glycosylation of multiple protein targets. Is responsible for general protein glycosylation within A.baylyi ADP1. Does not act as an O-antigen ligase. The protein is General O-oligosaccharyltransferase of Acinetobacter baylyi (strain ATCC 33305 / BD413 / ADP1).